Reading from the N-terminus, the 193-residue chain is Ribosomal RNA small subunit methyltransferase G (193 aa).

S-adenosyl-L-methionine is bound by residues Gly-61, Leu-66, 112 to 113 (IE), and Arg-126.

The protein belongs to the methyltransferase superfamily. RNA methyltransferase RsmG family.

It localises to the cytoplasm. The catalysed reaction is guanosine(527) in 16S rRNA + S-adenosyl-L-methionine = N(7)-methylguanosine(527) in 16S rRNA + S-adenosyl-L-homocysteine. Specifically methylates the N7 position of guanine in position 527 of 16S rRNA. The polypeptide is Ribosomal RNA small subunit methyltransferase G (Paracoccus denitrificans (strain Pd 1222)).